Consider the following 378-residue polypeptide: MSQSISAQSGYTLPVFACASAIAAVETLLTSNCPDSVTLELLEPARTAEIAIEQGALLGHHRALAITRSEPGNNLDLTRHTPVWAEVEFTPGEGKLIIQGGEGIGKQLDREGQAAIYSYAQRLLRHHLQPYISGDQTLMVSLILPLGRTLATRTSNAAFGVVEGLSLLGTSGIAQPLSAPEQLAEFQQHLTSAAQQHQCLVFCLGENGLDLARQWGVPLDQMVKTANWLGSLFVAAAAVGVQEILLLGYHGKLIKLAGGIFHTHHHLADGRLEILTAQAVQAGLPYPLVQELGQAPTTEAGLKLLRHWQTEQNCPWVSKIYQAMADTVDRRSEEYVYKVSQHQLKVGSLLFDGDRQPVAISTQGQAMADKLGMTIPET.

Belongs to the CbiD family.

It carries out the reaction Co-precorrin-5B + S-adenosyl-L-methionine = Co-precorrin-6A + S-adenosyl-L-homocysteine. The protein operates within cofactor biosynthesis; adenosylcobalamin biosynthesis; cob(II)yrinate a,c-diamide from sirohydrochlorin (anaerobic route): step 6/10. Catalyzes the methylation of C-1 in cobalt-precorrin-5B to form cobalt-precorrin-6A. In Synechocystis sp. (strain ATCC 27184 / PCC 6803 / Kazusa), this protein is Cobalt-precorrin-5B C(1)-methyltransferase.